A 40-amino-acid chain; its full sequence is Toxin CSTX-17 (40 aa).

4 disulfide bridges follow: Cys2-Cys17, Cys9-Cys22, Cys16-Cys33, and Cys24-Cys31. The residue at position 40 (Trp40) is a Tryptophan amide.

In terms of processing, contains 4 disulfide bonds. In terms of tissue distribution, expressed by the venom gland.

It is found in the secreted. This chain is Toxin CSTX-17, found in Cupiennius salei (American wandering spider).